A 52-amino-acid polypeptide reads, in one-letter code: MYKIIIPAILAIFALWILLQISLEMSIVKNPMNYFIVFIIFFLFVKMVKEKQ.

Transmembrane regions (helical) follow at residues 4–24 and 25–45; these read IIIPAILAIFALWILLQISLE and MSIVKNPMNYFIVFIIFFLFV.

It localises to the cell membrane. This is an uncharacterized protein from Bacillus subtilis (strain 168).